The primary structure comprises 32 residues: Chaperone protein DnaK (32 aa).

Belongs to the heat shock protein 70 family.

Functionally, acts as a chaperone. This is Chaperone protein DnaK from Anabaena sp. (strain L31).